The following is a 104-amino-acid chain: MTNRLELSGIICRTPLRKVSPSGIPHCQFVLEHRSVQEEAGFHRQAWCQMPVIISGHENQAITHSITVGSAVTVRGFISCHKAKNGLSKMVLHAEQIELIDSGD.

The region spanning 1–101 is the SSB domain; it reads MTNRLELSGI…LHAEQIELID (101 aa).

Belongs to the PriB family. In terms of assembly, homodimer. Interacts with DnaT. Interacts with PriA. Component of the replication restart primosome. Primosome assembly occurs via a 'hand-off' mechanism. PriA binds to replication forks, subsequently PriB then DnaT bind; DnaT then displaces ssDNA to generate the helicase loading substrate.

In terms of biological role, involved in the restart of stalled replication forks, which reloads the replicative helicase on sites far from the origin of replication; the PriA-PriB pathway is the major replication restart pathway. During primosome assembly it facilitates complex formation between PriA and DnaT on DNA; stabilizes PriA on DNA. Stimulates the DNA unwinding activity of PriA helicase. Its function is as follows. Binds single-stranded (ss)DNA at the primosome assembly site (PAS). One study finds it binds 15 nucleotide (nt) ssDNA. Another study finds the minimal ssDNA length for binding to PriB is 25 nt; prefers dT(30) over dA(30). Also binds 22 nt dsDNA. The sequence is that of Replication restart protein PriB from Klebsiella pneumoniae subsp. pneumoniae (strain ATCC 700721 / MGH 78578).